Reading from the N-terminus, the 707-residue chain is Polyribonucleotide nucleotidyltransferase (707 aa).

Mg(2+)-binding residues include D487 and D493. The 60-residue stretch at 554–613 (PSMATIKIDPDKIRDVIGKGGATIRKICDDTGASIDLDDDGTVRIYAEDKTAAKAAIDTV) folds into the KH domain. The region spanning 623–691 (GKLYRGTVAR…NRNRVKLSIK (69 aa)) is the S1 motif domain.

The protein belongs to the polyribonucleotide nucleotidyltransferase family. Component of the RNA degradosome, which is a multiprotein complex involved in RNA processing and mRNA degradation. It depends on Mg(2+) as a cofactor.

It localises to the cytoplasm. It catalyses the reaction RNA(n+1) + phosphate = RNA(n) + a ribonucleoside 5'-diphosphate. Functionally, involved in mRNA degradation. Catalyzes the phosphorolysis of single-stranded polyribonucleotides processively in the 3'- to 5'-direction. This is Polyribonucleotide nucleotidyltransferase from Chromohalobacter salexigens (strain ATCC BAA-138 / DSM 3043 / CIP 106854 / NCIMB 13768 / 1H11).